The primary structure comprises 382 residues: MESGSNSTSCPMAFAGDNSDGPMCPMMMMMPPIMTSHQHHGHDHQHQQQEHDGYAYQSHHQQSSSLFLQSLAPPQGTKNKVASSSSPSSCAPAYSLMEIHHNEIVAGGINPCSSSSSSASVKAKIMAHPHYHRLLAAYVNCQKVGAPPEVVARLEEACSSAAAAAASMGPTGCLGEDPGLDQFMEAYCEMLVKYEQELSKPFKEAMVFLQRVECQFKSLSLSSPSSFSGYGETAIDRNNNGSSEEEVDMNNEFVDPQAEDRELKGQLLRKYSGYLGSLKQEFMKKRKKGKLPKEARQQLLDWWSRHYKWPYPSEQQKLALAESTGLDQKQINNWFINQRKRHWKPSEDMQFVVMDATHPHHYFMDNVLGNPFPMDHISSTML.

The disordered stretch occupies residues 26–59 (MMMMMPPIMTSHQHHGHDHQHQQQEHDGYAYQSH). Basic and acidic residues predominate over residues 44–53 (HQHQQQEHDG). The ELK domain occupies 262 to 282 (ELKGQLLRKYSGYLGSLKQEF). Positions 283–346 (MKKRKKGKLP…NQRKRHWKPS (64 aa)) form a DNA-binding region, homeobox; TALE-type.

Belongs to the TALE/KNOX homeobox family. As to quaternary structure, forms homodimers. May form heterodimeric complexes with TALE/BELL proteins BEL1, BLH2, BLH3, BLH8/PNF, BLH9/PNY and ATH1. Interacts with CCT8. Binds to MBP2C; this interaction reduces RNA binding capacity. Interacts with FTIP3 and FTIP4. Expressed in all four types of shoot apical meristems (SAM) i.e. in vegetative, axillary, inflorescence and floral.

The protein localises to the nucleus. It is found in the cell junction. It localises to the plasmodesma. The protein resides in the cytoplasm. Its subcellular location is the endosome. The protein localises to the cell membrane. Required for shoot apical meristem (SAM) formation during embryogenesis. Negatively regulates ASYMMETRIC LEAVES1 (AS1) and ASYMMETRIC LEAVES2 (AS2 or LBD6). Probably binds to the DNA sequence 5'-TGAC-3'. Binds to RNA. The sequence is that of Homeobox protein SHOOT MERISTEMLESS from Arabidopsis thaliana (Mouse-ear cress).